Here is an 88-residue protein sequence, read N- to C-terminus: uncharacterized protein (88 aa).

A signal peptide spans 1-24 (MLPRSCKDFYETLRTAVLCGQACA).

It to Rhizobium NGR234A y4oL.

This is an uncharacterized protein from Sinorhizobium fredii (strain NBRC 101917 / NGR234).